A 196-amino-acid chain; its full sequence is 3-isopropylmalate dehydratase small subunit (196 aa).

This sequence belongs to the LeuD family. LeuD type 1 subfamily. In terms of assembly, heterodimer of LeuC and LeuD.

It carries out the reaction (2R,3S)-3-isopropylmalate = (2S)-2-isopropylmalate. It functions in the pathway amino-acid biosynthesis; L-leucine biosynthesis; L-leucine from 3-methyl-2-oxobutanoate: step 2/4. Functionally, catalyzes the isomerization between 2-isopropylmalate and 3-isopropylmalate, via the formation of 2-isopropylmaleate. The polypeptide is 3-isopropylmalate dehydratase small subunit (Streptococcus sanguinis (strain SK36)).